A 185-amino-acid chain; its full sequence is Ribosome-recycling factor (185 aa).

Belongs to the RRF family.

The protein resides in the cytoplasm. Its function is as follows. Responsible for the release of ribosomes from messenger RNA at the termination of protein biosynthesis. May increase the efficiency of translation by recycling ribosomes from one round of translation to another. This Corynebacterium jeikeium (strain K411) protein is Ribosome-recycling factor.